We begin with the raw amino-acid sequence, 413 residues long: Probable aminotransferase sirI (413 aa).

An N6-(pyridoxal phosphate)lysine modification is found at Lys-255.

The protein belongs to the class-I pyridoxal-phosphate-dependent aminotransferase family. Pyridoxal 5'-phosphate is required as a cofactor.

It participates in mycotoxin biosynthesis. Functionally, probable aminotransferase; part of the gene cluster that mediates the biosynthesis of sirodesmin PL, an epipolythiodioxopiperazine (ETP) characterized by a disulfide bridged cyclic dipeptide and that acts as a phytotoxin which is involved in the blackleg didease of canola. SirD catalyzes the O-prenylation of L-tyrosine (L-Tyr) in the presence of dimethylallyl diphosphate (DMAPP) to yield 4-O-dimethylallyl-L-Tyr, and therefore represents probably the first pathway-specific enzyme in the biosynthesis of sirodesmin PL. 4-O-dimethylallyl-L-Tyr, then undergoes condensation with L-Ser in a reaction catalyzed by the non-ribosomal peptide synthase sirP to form the diketopiperazine (DKP) backbone. Further bishydroxylation of the DKP performed by the cytochrome P450 monooxygenase sirC leads to the production of the intermediate phomamide. This step is essential to form the reactive thiol group required for toxicity of sirodesmin PL. The next steps of sirodesmin biosynthesis are not well understood yet, but some predictions could be made from intermediate compounds identification. Phomamide is converted into phomalizarine via oxidation, probably by sirT. Further oxidation, methylation (by sirM or sirN) and reduction steps convert phomalizarine to deacetyl sirodesmin. Finally, acetyltransferase sirH probably acetylates deacetyl sirodesmin to produce sirodesmin PL. The protein is Probable aminotransferase sirI of Leptosphaeria maculans (Blackleg fungus).